We begin with the raw amino-acid sequence, 458 residues long: D-inositol 3-phosphate glycosyltransferase (458 aa).

The disordered stretch occupies residues 1-29 (MRADRPGHRSRGINPGPGMFTLVGPDERD). His-47 provides a ligand contact to 1D-myo-inositol 3-phosphate. UDP-N-acetyl-alpha-D-glucosamine-binding positions include 53–54 (QP) and Gly-61. 1D-myo-inositol 3-phosphate-binding positions include 58-63 (DAGGMN), Lys-116, Tyr-149, Thr-173, and Arg-193. Residues Arg-267, Lys-272, and Val-339 each coordinate UDP-N-acetyl-alpha-D-glucosamine. Residue Ala-351 coordinates Mg(2+). Positions 361 and 369 each coordinate UDP-N-acetyl-alpha-D-glucosamine. Thr-375 contributes to the Mg(2+) binding site.

It belongs to the glycosyltransferase group 1 family. MshA subfamily. As to quaternary structure, homodimer.

It carries out the reaction 1D-myo-inositol 3-phosphate + UDP-N-acetyl-alpha-D-glucosamine = 1D-myo-inositol 2-acetamido-2-deoxy-alpha-D-glucopyranoside 3-phosphate + UDP + H(+). Catalyzes the transfer of a N-acetyl-glucosamine moiety to 1D-myo-inositol 3-phosphate to produce 1D-myo-inositol 2-acetamido-2-deoxy-glucopyranoside 3-phosphate in the mycothiol biosynthesis pathway. The polypeptide is D-inositol 3-phosphate glycosyltransferase (Nocardioides sp. (strain ATCC BAA-499 / JS614)).